The primary structure comprises 458 residues: tRNA modification GTPase MnmE (458 aa).

Arg28, Glu85, and Lys124 together coordinate (6S)-5-formyl-5,6,7,8-tetrahydrofolate. The region spanning 220 to 381 is the TrmE-type G domain; that stretch reads GMNVVIAGRP…LKEHLKAVMG (162 aa). Asn230 is a K(+) binding site. Residues 230-235, 249-255, and 274-277 each bind GTP; these read NAGKSS, TDIEGTT, and DTAG. Residue Ser234 participates in Mg(2+) binding. Positions 249, 251, and 254 each coordinate K(+). Residue Thr255 participates in Mg(2+) binding. (6S)-5-formyl-5,6,7,8-tetrahydrofolate is bound at residue Lys458.

This sequence belongs to the TRAFAC class TrmE-Era-EngA-EngB-Septin-like GTPase superfamily. TrmE GTPase family. As to quaternary structure, homodimer. Heterotetramer of two MnmE and two MnmG subunits. Requires K(+) as cofactor.

The protein localises to the cytoplasm. Functionally, exhibits a very high intrinsic GTPase hydrolysis rate. Involved in the addition of a carboxymethylaminomethyl (cmnm) group at the wobble position (U34) of certain tRNAs, forming tRNA-cmnm(5)s(2)U34. This chain is tRNA modification GTPase MnmE, found in Chromohalobacter salexigens (strain ATCC BAA-138 / DSM 3043 / CIP 106854 / NCIMB 13768 / 1H11).